Consider the following 239-residue polypeptide: Probable transcriptional regulatory protein BPUM_0743 (239 aa).

This sequence belongs to the TACO1 family. YeeN subfamily.

The protein resides in the cytoplasm. The polypeptide is Probable transcriptional regulatory protein BPUM_0743 (Bacillus pumilus (strain SAFR-032)).